The chain runs to 313 residues: MVHFHPFGNVNFYEMDWSLKGDLWAHDPVIAKEGSRWYVFHTGSGIQIKTSEDGVHWENMGRVFPSLPDWCKQYVPEKDEDHLWAPDICFYNGIYYLYYSVSTFGKNTSVIGLATNRTLDPRDPDYEWKDMGPVIHSTASDNYNAIDPNVVFDQEGQPWLSFGSFWSGIQLIQLDTETMKPAAQAELLTIASRGEEPNAIEAPFIVCRNGYYYLFVSFDFCCRGIESTYKIAVGRSKDITGPYVDKNGVSMMQGGGTILDAGNDRWIGPGHCAVYFSGVSAILVNHAYDALKNGEPTLQIRPLYWDDEGWPYL.

The active-site Proton acceptor is the Asp27. Substrate-binding positions include Asp27, Gly105, 144–147 (NAID), and 164–166 (SFW). The Proton donor role is filled by Glu201. His271 is a binding site for Ca(2+).

Belongs to the glycosyl hydrolase 43 family. As to quaternary structure, monomer. The cofactor is Ca(2+).

It localises to the cytoplasm. The enzyme catalyses Endohydrolysis of (1-&gt;5)-alpha-arabinofuranosidic linkages in (1-&gt;5)-arabinans.. It participates in glycan metabolism; L-arabinan degradation. Involved in the degradation of arabinan and is a key enzyme in the complete degradation of the plant cell wall. Catalyzes the cleavage of endo alpha-(1-&gt;5)-L-arabinofuranosyl residues in debranched arabinan. This is Intracellular endo-alpha-(1-&gt;5)-L-arabinanase (abn-ts) from Geobacillus thermodenitrificans.